Here is a 971-residue protein sequence, read N- to C-terminus: Reversion-inducing cysteine-rich protein with Kazal motifs (971 aa).

A signal peptide spans 1–22 (MASVRASPRSALLLLLAAAGVA). The stretch at 37 to 84 (CCNHSKDNQMCRDVCEQIFSSKSESRLKHLLQRAPDYCPETMVEIWSC) is one Knot 1 repeat. Positions 37–338 (CCNHSKDNQM…NPVEVSMLTC (302 aa)) are 5 X Knot repeats. 2 N-linked (GlcNAc...) asparagine glycosylation sites follow: Asn-39 and Asn-86. Knot repeat units follow at residues 104 to 141 (CCEL…LFSC) and 151 to 197 (CCSY…LIHC). Asn-200 is a glycosylation site (N-linked (GlcNAc...) asparagine). 2 Knot repeats span residues 216–263 (CCDR…LWQC) and 292–338 (CCSK…MLTC). N-linked (GlcNAc...) asparagine glycans are attached at residues Asn-297 and Asn-352. 3 consecutive Kazal-like domains span residues 627–673 (TFTG…PCIS), 698–752 (TFDK…PCQP), and 753–789 (FCRA…PCQA). Disulfide bonds link Cys-633/Cys-658, Cys-635/Cys-654, Cys-643/Cys-671, Cys-716/Cys-735, Cys-724/Cys-750, and Cys-761/Cys-787. The region spanning 704–750 (CSQYECVPRQLTCDQARDPVCDTDHMEHSNLCTLYQRGKSLSYRGPC) is the Kazal-like 2; degenerate domain. A lipid anchor (GPI-anchor amidated serine) is attached at Ser-942. The propeptide at 943 to 971 (SAVVGRPLFHSLLLLLSLGLTVHLLWTRP) is removed in mature form.

The protein belongs to the RECK family. As to quaternary structure, interacts (via knot repeats) with WNT7A (via disordered linker region); the interaction is direct. Interacts (via knot repeats) with WNT7B (via disordered linker region); the interaction is direct. Interacts with ADGRA2; the interaction is direct. Interacts with MMP9.

It localises to the cell membrane. Its function is as follows. Functions together with ADGRA2 to enable brain endothelial cells to selectively respond to Wnt7 signals (WNT7A or WNT7B). Plays a key role in Wnt7-specific responses: required for central nervous system (CNS) angiogenesis and blood-brain barrier regulation. Acts as a Wnt7-specific coactivator of canonical Wnt signaling by decoding Wnt ligands: acts by interacting specifically with the disordered linker region of Wnt7, thereby conferring ligand selectivity for Wnt7. ADGRA2 is then required to deliver RECK-bound Wnt7 to frizzled by assembling a higher-order RECK-ADGRA2-Fzd-LRP5-LRP6 complex. Also acts as a serine protease inhibitor: negatively regulates matrix metalloproteinase-9 (MMP9) by suppressing MMP9 secretion and by direct inhibition of its enzymatic activity. Also inhibits metalloproteinase activity of MMP2 and MMP14 (MT1-MMP). This Mus musculus (Mouse) protein is Reversion-inducing cysteine-rich protein with Kazal motifs.